The chain runs to 459 residues: tRNA modification GTPase MnmE (459 aa).

The (6S)-5-formyl-5,6,7,8-tetrahydrofolate site is built by arginine 20, glutamate 85, and arginine 124. Positions 221–380 (GLSTVIIGRP…LEEAIQSLFY (160 aa)) constitute a TrmE-type G domain. Asparagine 231 is a K(+) binding site. GTP is bound by residues 231–236 (NVGKSS), 250–256 (TDIPGTT), and 275–278 (DTAG). Serine 235 contacts Mg(2+). K(+)-binding residues include threonine 250, isoleucine 252, and threonine 255. Threonine 256 provides a ligand contact to Mg(2+). Lysine 459 serves as a coordination point for (6S)-5-formyl-5,6,7,8-tetrahydrofolate.

Belongs to the TRAFAC class TrmE-Era-EngA-EngB-Septin-like GTPase superfamily. TrmE GTPase family. As to quaternary structure, homodimer. Heterotetramer of two MnmE and two MnmG subunits. Requires K(+) as cofactor.

It is found in the cytoplasm. Functionally, exhibits a very high intrinsic GTPase hydrolysis rate. Involved in the addition of a carboxymethylaminomethyl (cmnm) group at the wobble position (U34) of certain tRNAs, forming tRNA-cmnm(5)s(2)U34. The sequence is that of tRNA modification GTPase MnmE from Bacillus subtilis (strain 168).